Reading from the N-terminus, the 123-residue chain is Large ribosomal subunit protein uL18 (123 aa).

This sequence belongs to the universal ribosomal protein uL18 family. As to quaternary structure, part of the 50S ribosomal subunit; part of the 5S rRNA/L5/L18/L25 subcomplex. Contacts the 5S and 23S rRNAs.

Its function is as follows. This is one of the proteins that bind and probably mediate the attachment of the 5S RNA into the large ribosomal subunit, where it forms part of the central protuberance. The chain is Large ribosomal subunit protein uL18 from Wolbachia pipientis subsp. Culex pipiens (strain wPip).